Here is a 520-residue protein sequence, read N- to C-terminus: Putative cytochrome P450 CYP13A5 (520 aa).

Heme is bound at residue Cys-464.

Belongs to the cytochrome P450 family. Heme is required as a cofactor.

Cytochromes P450 are a group of heme-thiolate monooxygenases. They oxidize a variety of structurally unrelated compounds, including steroids, fatty acids, and xenobiotics. This chain is Putative cytochrome P450 CYP13A5 (cyp-13A5), found in Caenorhabditis elegans.